A 361-amino-acid polypeptide reads, in one-letter code: Chorismate synthase (361 aa).

Over residues 40 to 49 (DLQHDLDRRR) the composition is skewed to basic and acidic residues. A disordered region spans residues 40–60 (DLQHDLDRRRPGTSRHTTQRR). NADP(+)-binding residues include Arg-48 and Arg-54. Residues 125 to 127 (RSS), 237 to 238 (NA), Gly-277, 292 to 296 (KPTSS), and Arg-318 each bind FMN.

Belongs to the chorismate synthase family. Homotetramer. FMNH2 serves as cofactor.

The catalysed reaction is 5-O-(1-carboxyvinyl)-3-phosphoshikimate = chorismate + phosphate. It functions in the pathway metabolic intermediate biosynthesis; chorismate biosynthesis; chorismate from D-erythrose 4-phosphate and phosphoenolpyruvate: step 7/7. Catalyzes the anti-1,4-elimination of the C-3 phosphate and the C-6 proR hydrogen from 5-enolpyruvylshikimate-3-phosphate (EPSP) to yield chorismate, which is the branch point compound that serves as the starting substrate for the three terminal pathways of aromatic amino acid biosynthesis. This reaction introduces a second double bond into the aromatic ring system. The protein is Chorismate synthase of Chromohalobacter salexigens (strain ATCC BAA-138 / DSM 3043 / CIP 106854 / NCIMB 13768 / 1H11).